A 1091-amino-acid polypeptide reads, in one-letter code: MKLLYTDIRTSLTEILTREAEELVAAGKRVFYIAPNSLSFEKERAVLECLSQQASFSITVTRFAQMARYLVLNDLPAKTTLDDIGLGLAFYKCLAELDPKDLRVYGAIKQDPQLIQQLIELYHEMTKSQMSFLDLENLTDEDKRADLLLIFEKVTAYLNQGQLAQGSQLSHLIEAIENDKVSSDFNQITLVIDGFTRFSAEEERVVDLLHGKGVEIVIGAYASKKAYTSPFSEGNLYQASVKFLHHLASKYQTPAQDCSQTHEKMDSFDKASRLLESSYDFSELALDVDEKDRENLQIWSCLTQKEELELVARSIRQKLHENSDLSYKHFRILLGDVASYQLSLKTIFDQYQIPFYLGRSEAMAHHPLTQFVESILALKRYRFRQEDLINLLRTDLYTDLSQSDIDAFEQYIRYLGINGLPAFQQIFTKSHHGKFNLERLNVLRLRILAPLETLFASRKQKAENLLQKWSVFLKEGAVTKQLQDLTTTLEAVEQERQAEVWKAFCHVLEQFATVFAGSQVSLEDFLALLHSGMSLSQYRTIPATVDTVLVQSYDLIAPLTADFVYAIGLTQDNLPKISQNTSLLTDEERQNLNQATEEGVQLLIASSENLKKNRYTMLSLVNSARKQLFLSAPSLFNESESKESAYLQELIHFGFRRREKRMNHKGLSKEDMGSYHSLLSSLVAYHQQGEMSDTEQDLTFVKVLSRVIGKKLDLQGLENPAIPTSPSSKTLAKDTLQALYPAKQEFYLSTSGLTEFYRNEYSYFLRYVLGLQEELRLRPDARSHGNFLHRIFERALQLPNEDSFDQRLEQAIQETSQEREFEAIYQESLEAQFTKEVLLDVARTTGHILRHNPAIETIKEEANFGGKDQAFIQLDNGRSVFVRGKVDRIDRLKANGAIGVVDYKSSLTQFQFPHFFNGLNSQLPTYLAALKREGKQNFFGAMYLEMAEPVQSLMAVKSLAGAVVEASKSMKYQGLFLEKESSYLGEFYNKNKANQLTDEEFQLLLDYNAYLYKKAAEKILAGRFAINPYTENGRSIAPYVQQHQAITGFEANYHLGQARFLKKLDLADGKRLVGEKLKQAWFEKIREELNR.

Belongs to the helicase family. AddB/RexB type 2 subfamily. Heterodimer of AddA and RexB. It depends on Mg(2+) as a cofactor.

The heterodimer acts as both an ATP-dependent DNA helicase and an ATP-dependent, dual-direction single-stranded exonuclease. Recognizes the chi site generating a DNA molecule suitable for the initiation of homologous recombination. This subunit has 5' -&gt; 3' nuclease activity but not helicase activity. This is ATP-dependent helicase/deoxyribonuclease subunit B from Streptococcus pneumoniae (strain ATCC 700669 / Spain 23F-1).